Consider the following 457-residue polypeptide: Argininosuccinate lyase (457 aa).

The protein belongs to the lyase 1 family. Argininosuccinate lyase subfamily.

It is found in the cytoplasm. The catalysed reaction is 2-(N(omega)-L-arginino)succinate = fumarate + L-arginine. Its pathway is amino-acid biosynthesis; L-arginine biosynthesis; L-arginine from L-ornithine and carbamoyl phosphate: step 3/3. The sequence is that of Argininosuccinate lyase from Shigella sonnei (strain Ss046).